We begin with the raw amino-acid sequence, 256 residues long: Trans-aconitate 2-methyltransferase (256 aa).

This sequence belongs to the methyltransferase superfamily. Tam family.

Its subcellular location is the cytoplasm. It carries out the reaction trans-aconitate + S-adenosyl-L-methionine = (E)-3-(methoxycarbonyl)pent-2-enedioate + S-adenosyl-L-homocysteine. Its function is as follows. Catalyzes the S-adenosylmethionine monomethyl esterification of trans-aconitate. The polypeptide is Trans-aconitate 2-methyltransferase (Rhizobium leguminosarum bv. trifolii (strain WSM2304)).